The chain runs to 275 residues: Dermonecrotic toxin SpeSicTox-betaIIA3ii (275 aa).

His5 is an active-site residue. The Mg(2+) site is built by Glu25 and Asp27. Catalysis depends on His41, which acts as the Nucleophile. 2 disulfide bridges follow: Cys45–Cys51 and Cys47–Cys190. Position 85 (Asp85) interacts with Mg(2+).

This sequence belongs to the arthropod phospholipase D family. Class II subfamily. The cofactor is Mg(2+). In terms of tissue distribution, expressed by the venom gland.

It localises to the secreted. The catalysed reaction is an N-(acyl)-sphingosylphosphocholine = an N-(acyl)-sphingosyl-1,3-cyclic phosphate + choline. The enzyme catalyses an N-(acyl)-sphingosylphosphoethanolamine = an N-(acyl)-sphingosyl-1,3-cyclic phosphate + ethanolamine. It catalyses the reaction a 1-acyl-sn-glycero-3-phosphocholine = a 1-acyl-sn-glycero-2,3-cyclic phosphate + choline. It carries out the reaction a 1-acyl-sn-glycero-3-phosphoethanolamine = a 1-acyl-sn-glycero-2,3-cyclic phosphate + ethanolamine. Functionally, dermonecrotic toxins cleave the phosphodiester linkage between the phosphate and headgroup of certain phospholipids (sphingolipid and lysolipid substrates), forming an alcohol (often choline) and a cyclic phosphate. This toxin acts on sphingomyelin (SM). It may also act on ceramide phosphoethanolamine (CPE), lysophosphatidylcholine (LPC) and lysophosphatidylethanolamine (LPE), but not on lysophosphatidylserine (LPS), and lysophosphatidylglycerol (LPG). It acts by transphosphatidylation, releasing exclusively cyclic phosphate products as second products. Induces dermonecrosis, hemolysis, increased vascular permeability, edema, inflammatory response, and platelet aggregation. The sequence is that of Dermonecrotic toxin SpeSicTox-betaIIA3ii from Sicarius peruensis (Six-eyed sand spider).